An 84-amino-acid polypeptide reads, in one-letter code: Small ribosomal subunit protein bS18 (84 aa).

The protein belongs to the bacterial ribosomal protein bS18 family. As to quaternary structure, part of the 30S ribosomal subunit. Forms a tight heterodimer with protein bS6.

Functionally, binds as a heterodimer with protein bS6 to the central domain of the 16S rRNA, where it helps stabilize the platform of the 30S subunit. This is Small ribosomal subunit protein bS18 from Clostridium kluyveri (strain NBRC 12016).